Consider the following 140-residue polypeptide: Hemoglobin subunit beta (140 aa).

One can recognise a Globin domain in the interval 1–140 (GSDLVSGFWG…VGDALAKAYH (140 aa)). Histidine 57 and histidine 86 together coordinate heme b.

The protein belongs to the globin family. Heterotetramer of two alpha chains and two beta chains. Red blood cells.

Involved in oxygen transport from the lung to the various peripheral tissues. The polypeptide is Hemoglobin subunit beta (HBB) (Pelophylax lessonae (Pool frog)).